The following is a 336-amino-acid chain: Palmitoyltransferase SWF1 (336 aa).

Residues 1 to 2 (MS) lie on the Lumenal side of the membrane. Residues 3–23 (WNLLFVLLIGFVVLILLSPVF) form a helical membrane-spanning segment. Over 24 to 50 (KSTWPFSTFYRNVFQPFLVDDQKYRWK) the chain is Cytoplasmic. A helical transmembrane segment spans residues 51–71 (LHLVPLFYTSIYLYLVYTYHM). Residues 72-86 (RVESTIKNELFLLER) lie on the Lumenal side of the membrane. The chain crosses the membrane as a helical span at residues 87–107 (ILIVPIIILPPVALGILAMVS). Residues 108–179 (RAEDSKDHKS…CIGKGNYLQF (72 aa)) are Cytoplasmic-facing. One can recognise a DHHC domain in the interval 134–184 (IKCSTCRIVKPARSKHCSICNRCVLVADHHCIWINNCIGKGNYLQFYLFLI). A helical transmembrane segment spans residues 180-200 (YLFLISNIFSMCYAFLRLWYI). The Lumenal segment spans residues 201–216 (SLNSTSTLPRAVLTLT). A helical transmembrane segment spans residues 217–237 (ILCGCFTIICAIFTYLQLAIV). At 238 to 336 (KEGMTTNEQD…TFLANLTDLI (99 aa)) the chain is on the cytoplasmic side.

This sequence belongs to the DHHC palmitoyltransferase family. SWF1 subfamily.

Its subcellular location is the endoplasmic reticulum membrane. The catalysed reaction is L-cysteinyl-[protein] + hexadecanoyl-CoA = S-hexadecanoyl-L-cysteinyl-[protein] + CoA. Palmitoyltransferase that targets several endosomal SNAREs. Palmitoylates the SNAREs SNC1, SNC2, SYN8 and TLG1, at cysteine residues close to the cytoplasmic end of their transmembrane domain. May have a role in the cellular quality control of transmembrane domain-containing proteins. This is Palmitoyltransferase SWF1 (SWF1) from Saccharomyces cerevisiae (strain ATCC 204508 / S288c) (Baker's yeast).